Here is a 134-residue protein sequence, read N- to C-terminus: 6,7-dimethyl-8-ribityllumazine synthase (134 aa).

Residues F12, V44–D46, and S68–I70 contribute to the 5-amino-6-(D-ribitylamino)uracil site. Position 73 to 74 (E73 to T74) interacts with (2S)-2-hydroxy-3-oxobutyl phosphate. Catalysis depends on H76, which acts as the Proton donor. A 5-amino-6-(D-ribitylamino)uracil-binding site is contributed by L101. Residue R116 coordinates (2S)-2-hydroxy-3-oxobutyl phosphate.

It belongs to the DMRL synthase family.

It carries out the reaction (2S)-2-hydroxy-3-oxobutyl phosphate + 5-amino-6-(D-ribitylamino)uracil = 6,7-dimethyl-8-(1-D-ribityl)lumazine + phosphate + 2 H2O + H(+). It functions in the pathway cofactor biosynthesis; riboflavin biosynthesis; riboflavin from 2-hydroxy-3-oxobutyl phosphate and 5-amino-6-(D-ribitylamino)uracil: step 1/2. Functionally, catalyzes the formation of 6,7-dimethyl-8-ribityllumazine by condensation of 5-amino-6-(D-ribitylamino)uracil with 3,4-dihydroxy-2-butanone 4-phosphate. This is the penultimate step in the biosynthesis of riboflavin. This Methanosarcina mazei (strain ATCC BAA-159 / DSM 3647 / Goe1 / Go1 / JCM 11833 / OCM 88) (Methanosarcina frisia) protein is 6,7-dimethyl-8-ribityllumazine synthase.